Here is a 394-residue protein sequence, read N- to C-terminus: 1-acylglycerol-3-phosphate O-acyltransferase ICT1 (394 aa).

The AB hydrolase-1 domain occupies 74 to 381 (VLIHGYAASS…AGHNLFLDNP (308 aa)). The HXXXXD motif signature appears at 374-379 (HNLFLD).

This sequence belongs to the peptidase S33 family. ABHD4/ABHD5 subfamily.

It catalyses the reaction a 1-acyl-sn-glycero-3-phosphate + an acyl-CoA = a 1,2-diacyl-sn-glycero-3-phosphate + CoA. Functionally, lysophosphatidic acid acyltransferase involved in membrane remodeling leading to increased organic solvent tolerance. Involved in resistance to azoles and copper. In Saccharomyces cerevisiae (strain ATCC 204508 / S288c) (Baker's yeast), this protein is 1-acylglycerol-3-phosphate O-acyltransferase ICT1 (ICT1).